The primary structure comprises 369 residues: Transmembrane protein adipocyte-associated 1 (369 aa).

Asn20 carries N-linked (GlcNAc...) asparagine glycosylation. Transmembrane regions (helical) follow at residues 45–65 (LLLL…LPLA), 73–93 (SSPI…VGIA), 120–140 (FFLL…GHLE), 148–168 (VLAI…TLEI), 189–209 (QFWL…VILP), 237–257 (LLQG…LCCV), and 262–282 (FLYF…GFFG). Asn329 is a glycosylation site (N-linked (GlcNAc...) asparagine).

Belongs to the UPF0359 family. As to expression, ubiquitous, with higher levels in heart, brain, lung, liver and kidney.

It localises to the membrane. This Mus musculus (Mouse) protein is Transmembrane protein adipocyte-associated 1 (Tpra1).